Here is a 206-residue protein sequence, read N- to C-terminus: Type III pantothenate kinase (206 aa).

Residue 5-12 participates in ATP binding; the sequence is DIGNTFLH. Substrate-binding positions include tyrosine 69 and 73–76; that span reads GVDR. The Proton acceptor role is filled by aspartate 75. Position 90 (aspartate 90) interacts with K(+). Serine 93 lines the ATP pocket. Threonine 145 is a binding site for substrate.

Belongs to the type III pantothenate kinase family. Homodimer. Requires NH4(+) as cofactor. The cofactor is K(+).

Its subcellular location is the cytoplasm. It carries out the reaction (R)-pantothenate + ATP = (R)-4'-phosphopantothenate + ADP + H(+). The protein operates within cofactor biosynthesis; coenzyme A biosynthesis; CoA from (R)-pantothenate: step 1/5. In terms of biological role, catalyzes the phosphorylation of pantothenate (Pan), the first step in CoA biosynthesis. This Helicobacter hepaticus (strain ATCC 51449 / 3B1) protein is Type III pantothenate kinase.